Here is a 728-residue protein sequence, read N- to C-terminus: Catalase-peroxidase 1 (728 aa).

A cross-link (tryptophyl-tyrosyl-methioninium (Trp-Tyr) (with M-244)) is located at residues 91 to 218 (WHSAGTYRTA…LAAVQMGLIY (128 aa)). H92 (proton acceptor) is an active-site residue. Residues 218 to 244 (YVNPEGPDGNPDPVAAAHDIRETFARM) constitute a cross-link (tryptophyl-tyrosyl-methioninium (Tyr-Met) (with W-91)). H259 is a heme b binding site.

This sequence belongs to the peroxidase family. Peroxidase/catalase subfamily. In terms of assembly, homodimer or homotetramer. Heme b is required as a cofactor. In terms of processing, formation of the three residue Trp-Tyr-Met cross-link is important for the catalase, but not the peroxidase activity of the enzyme.

It carries out the reaction H2O2 + AH2 = A + 2 H2O. The enzyme catalyses 2 H2O2 = O2 + 2 H2O. Its function is as follows. Bifunctional enzyme with both catalase and broad-spectrum peroxidase activity. In Burkholderia cenocepacia (strain HI2424), this protein is Catalase-peroxidase 1.